Consider the following 459-residue polypeptide: Exodeoxyribonuclease 7 large subunit (459 aa).

Belongs to the XseA family. In terms of assembly, heterooligomer composed of large and small subunits.

Its subcellular location is the cytoplasm. The enzyme catalyses Exonucleolytic cleavage in either 5'- to 3'- or 3'- to 5'-direction to yield nucleoside 5'-phosphates.. Bidirectionally degrades single-stranded DNA into large acid-insoluble oligonucleotides, which are then degraded further into small acid-soluble oligonucleotides. The chain is Exodeoxyribonuclease 7 large subunit from Yersinia pseudotuberculosis serotype IB (strain PB1/+).